Reading from the N-terminus, the 348-residue chain is Protein RecA (348 aa).

69-76 (GPESSGKT) is a binding site for ATP.

The protein belongs to the RecA family.

It localises to the cytoplasm. Its function is as follows. Can catalyze the hydrolysis of ATP in the presence of single-stranded DNA, the ATP-dependent uptake of single-stranded DNA by duplex DNA, and the ATP-dependent hybridization of homologous single-stranded DNAs. It interacts with LexA causing its activation and leading to its autocatalytic cleavage. The sequence is that of Protein RecA from Gluconacetobacter polyoxogenes (Acetobacter polyoxogenes).